A 340-amino-acid chain; its full sequence is HTH-type transcriptional regulator CelR (340 aa).

Positions 1-61 (MERRRRPTLE…PNRAARTLVT (61 aa)) constitute an HTH lacI-type domain. Residues 9-28 (LEMVAALAGVGRGTVSRVIN) constitute a DNA-binding region (H-T-H motif).

The protein resides in the cytoplasm. Its activity is regulated as follows. Activity is controlled by cytoplasmic cellobiose levels. Binding of CelR to the celE promoter is inhibited specifically by low concentrations of cellobiose, the major end product of cellulases. Activity may also be regulated through post-translational modification. In terms of biological role, transcriptional regulator that regulates the expression of all six cellulases, encoded by the cel genes (designated celA through celF). Acts as a repressor. Specifically binds to a 14-bp inverted repeat site, which is present in the upstream region of the cellulase genes. This is HTH-type transcriptional regulator CelR from Thermobifida fusca (Thermomonospora fusca).